The chain runs to 554 residues: Glucose-6-phosphate isomerase (554 aa).

E359 serves as the catalytic Proton donor. Residues H390 and K518 contribute to the active site.

Belongs to the GPI family.

The protein localises to the cytoplasm. It carries out the reaction alpha-D-glucose 6-phosphate = beta-D-fructose 6-phosphate. It participates in carbohydrate biosynthesis; gluconeogenesis. Its pathway is carbohydrate degradation; glycolysis; D-glyceraldehyde 3-phosphate and glycerone phosphate from D-glucose: step 2/4. In terms of biological role, catalyzes the reversible isomerization of glucose-6-phosphate to fructose-6-phosphate. The sequence is that of Glucose-6-phosphate isomerase from Pseudomonas aeruginosa (strain LESB58).